The primary structure comprises 286 residues: ATP synthase gamma chain (286 aa).

This sequence belongs to the ATPase gamma chain family. In terms of assembly, F-type ATPases have 2 components, CF(1) - the catalytic core - and CF(0) - the membrane proton channel. CF(1) has five subunits: alpha(3), beta(3), gamma(1), delta(1), epsilon(1). CF(0) has three main subunits: a, b and c.

The protein resides in the cell inner membrane. Produces ATP from ADP in the presence of a proton gradient across the membrane. The gamma chain is believed to be important in regulating ATPase activity and the flow of protons through the CF(0) complex. The polypeptide is ATP synthase gamma chain (Flavobacterium johnsoniae (strain ATCC 17061 / DSM 2064 / JCM 8514 / BCRC 14874 / CCUG 350202 / NBRC 14942 / NCIMB 11054 / UW101) (Cytophaga johnsonae)).